We begin with the raw amino-acid sequence, 234 residues long: uncharacterized protein (234 aa).

A helical transmembrane segment spans residues 13-32 (KSINYYIFFFQYTLVYNTIQ). Disordered regions lie at residues 102–130 (HSKTTSLPFSSSSPQSSSSSSSSSSSSNS) and 159–185 (ESDSKSDSEFDSESNSDFDSESESEYE). Positions 103 to 130 (SKTTSLPFSSSSPQSSSSSSSSSSSSNS) are enriched in low complexity. The span at 167 to 185 (EFDSESNSDFDSESESEYE) shows a compositional bias: acidic residues.

It localises to the membrane. This is an uncharacterized protein from Dictyostelium discoideum (Social amoeba).